Here is a 421-residue protein sequence, read N- to C-terminus: Protein PHLOEM UNLOADING MODULATOR (421 aa).

7 helical membrane passes run Leu-30–Lys-50, Ile-60–Val-80, His-124–Phe-144, Tyr-158–Leu-178, Ala-286–Ala-306, Cys-323–Ala-343, and Thr-397–Leu-417.

This sequence belongs to the sphingomyelin synthase family.

Its subcellular location is the membrane. It participates in sphingolipid metabolism. Its function is as follows. Catalyzes the biosynthesis of sphingolipids with very long-chain fatty acid (VLCFA). Required for the formation of plasmodesmal cytoplasmic sleeve during the transition from type I to type II plasmodesmata to modulate post-sieve elements (SE) unloading and symplastic cell-to-cell molecular trafficking at the phloem pole pericycle (PPP)-endodermis interface in roots. In Arabidopsis thaliana (Mouse-ear cress), this protein is Protein PHLOEM UNLOADING MODULATOR.